Here is a 994-residue protein sequence, read N- to C-terminus: Phosphoenolpyruvate carboxylase (994 aa).

Residues M1–R66 are disordered. 2 stretches are compositionally biased toward low complexity: residues A14 to E25 and A41 to A54. Active-site residues include H204 and K646.

It belongs to the PEPCase type 1 family. The cofactor is Mg(2+).

The enzyme catalyses oxaloacetate + phosphate = phosphoenolpyruvate + hydrogencarbonate. Its function is as follows. Forms oxaloacetate, a four-carbon dicarboxylic acid source for the tricarboxylic acid cycle. This is Phosphoenolpyruvate carboxylase from Burkholderia pseudomallei (strain 668).